The primary structure comprises 559 residues: MATATIALQVNGQQGGGSEPAAAAAVVAAGDKWKPPQGTDSIKMENGQSTAAKLGLPPLTPEQQEALQKAKKYAMEQSIKSVLVKQTIAHQQQQLTNLQMAAVTMGFGDPLSPLQSMAAQRQRALAIMCRVYVGSIYYELGEDTIRQAFAPFGPIKSIDMSWDSVTMKHKGFAFVEYEVPEAAQLALEQMNSVMLGGRNIKVGRPSNIGQAQPIIDQLAEEARAFNRIYVASVHQDLSDDDIKSVFEAFGKIKSCTLARDPTTGKHKGYGFIEYEKAQSSQDAVSSMNLFDLGGQYLRVGKAVTPPMPLLTPATPGGLPPAAAVAAAAATAKITAQEAVAGAAVLGTLGTPGLVSPALTLAQPLGTLPQAVMAAQAPGVITGVTPARPPIPVTIPSVGVVNPILASPPTLGLLEPKKEKEEEELFPESERPEMLSEQEHMSISGSSARHMVMQKLLRKQESTVMVLRNMVDPKDIDDDLEGEVTEECGKFGAVNRVIIYQEKQGEEEDAEIIVKIFVEFSIASETHKAIQALNGRWFAGRKVVAEVYDQERFDNSDLSA.

Residues Met1–Phe516 form an inhibits homodimerization region. Residues Gln14 and Lys43 each participate in a glycyl lysine isopeptide (Lys-Gly) (interchain with G-Cter in SUMO2) cross-link. Thr60 is subject to Phosphothreonine. Residues Gln77–Ala559 form an inhibits transcriptional repression, interaction with ERCC3 and apoptosis induction region. Residue Lys80 forms a Glycyl lysine isopeptide (Lys-Gly) (interchain with G-Cter in SUMO2) linkage. Ser112 carries the post-translational modification Phosphoserine. 2 RRM domains span residues Cys129 to Asn207 and Asn226 to Thr304. The residue at position 244 (Ser244) is a Phosphoserine. The residue at position 251 (Lys251) is an N6-acetyllysine. At Thr314 the chain carries Phosphothreonine. The interval Lys416–Gln437 is disordered. A Glycyl lysine isopeptide (Lys-Gly) (interchain with G-Cter in SUMO2) cross-link involves residue Lys419. The span at Glu427 to Gln437 shows a compositional bias: basic and acidic residues. Residue Lys454 is modified to N6-acetyllysine. A Glycyl lysine isopeptide (Lys-Gly) (interchain with G-Cter in SUMO2) cross-link involves residue Lys458. One can recognise an RRM 3; atypical domain in the interval Thr462–Gln549.

This sequence belongs to the RRM half pint family. In terms of assembly, homodimer. Associates with the spliceosome. Found in a complex with RO60 and Y5 RNA. Found in a complex with FUBP1 and far upstream element (FUSE) DNA segment. Interacts directly with ERCC3. Interacts with CDK7 and GTF2H1. Interacts with SRSF11/P54. Does not interact with ERCC3 in xeroderma pigmentosum complementation group B (XPB) cells. Interacts with ARGLU1; interaction may be involved in ARGLU1-mediated modulation of alternative splicing. As to expression, isoform 2 is expressed in colonic epithelium and colorectal epithelium cancer (at protein level). Isoform 6 is expressed in colorectal epithelial cancer but below detection level in colonic epithelium. Expressed in heart, brain, placenta, lung, liver, skeletal muscle, kidney, pancreas, spleen, thymus, prostate, testis, ovary, small intestine, colon and peripheral blood leukocytes.

The protein localises to the nucleus. DNA- and RNA-binding protein, involved in several nuclear processes such as pre-mRNA splicing, apoptosis and transcription regulation. In association with FUBP1 regulates MYC transcription at the P2 promoter through the core-TFIIH basal transcription factor. Acts as a transcriptional repressor through the core-TFIIH basal transcription factor. Represses FUBP1-induced transcriptional activation but not basal transcription. Decreases ERCC3 helicase activity. Does not repress TFIIH-mediated transcription in xeroderma pigmentosum complementation group B (XPB) cells. Is also involved in pre-mRNA splicing. Promotes splicing of an intron with weak 3'-splice site and pyrimidine tract in a cooperative manner with U2AF2. Involved in apoptosis induction when overexpressed in HeLa cells. Isoform 6 failed to repress MYC transcription and inhibited FIR-induced apoptosis in colorectal cancer. Isoform 6 may contribute to tumor progression by enabling increased MYC expression and greater resistance to apoptosis in tumors than in normal cells. Modulates alternative splicing of several mRNAs. Binds to relaxed DNA of active promoter regions. Binds to the pyrimidine tract and 3'-splice site regions of pre-mRNA; binding is enhanced in presence of U2AF2. Binds to Y5 RNA in association with RO60. Binds to poly(U) RNA. This Homo sapiens (Human) protein is Poly(U)-binding-splicing factor PUF60.